A 210-amino-acid polypeptide reads, in one-letter code: Thymidylate kinase (210 aa).

9–16 (GPEGAGKT) is a binding site for ATP.

This sequence belongs to the thymidylate kinase family.

The enzyme catalyses dTMP + ATP = dTDP + ADP. In terms of biological role, phosphorylation of dTMP to form dTDP in both de novo and salvage pathways of dTTP synthesis. This is Thymidylate kinase from Thermomicrobium roseum (strain ATCC 27502 / DSM 5159 / P-2).